Reading from the N-terminus, the 140-residue chain is Trafficking protein particle complex subunit 2-like protein (140 aa).

It belongs to the TRAPP small subunits family. Sedlin subfamily.

In Dictyostelium discoideum (Social amoeba), this protein is Trafficking protein particle complex subunit 2-like protein (trappc2l).